The sequence spans 415 residues: Multidrug resistance protein MdtA (415 aa).

The first 21 residues, 1–21 (MKGSYKSRWVIVIVVVIAAIA), serve as a signal peptide directing secretion. Disordered regions lie at residues 32-60 (SRSA…GPLA) and 392-415 (EAQS…GARS). Positions 399–415 (PEEKATSREYAKKGARS) are enriched in basic and acidic residues.

This sequence belongs to the membrane fusion protein (MFP) (TC 8.A.1) family. Part of a tripartite efflux system composed of MdtA, MdtB and MdtC.

It is found in the cell inner membrane. Functionally, the MdtABC tripartite complex confers resistance against novobiocin and deoxycholate. This Escherichia coli (strain 55989 / EAEC) protein is Multidrug resistance protein MdtA.